Reading from the N-terminus, the 160-residue chain is Oligoribonuclease (160 aa).

The region spanning 8–158 (LIWIDLEMTG…YNKLKKKTLI (151 aa)) is the Exonuclease domain. Residue Y129 is part of the active site.

This sequence belongs to the oligoribonuclease family.

The protein localises to the cytoplasm. 3'-to-5' exoribonuclease specific for small oligoribonucleotides. This chain is Oligoribonuclease (orn), found in Buchnera aphidicola subsp. Baizongia pistaciae (strain Bp).